The sequence spans 285 residues: Elongation factor Ts (285 aa).

An involved in Mg(2+) ion dislocation from EF-Tu region spans residues 82–85 (TDFV).

It belongs to the EF-Ts family.

The protein resides in the cytoplasm. In terms of biological role, associates with the EF-Tu.GDP complex and induces the exchange of GDP to GTP. It remains bound to the aminoacyl-tRNA.EF-Tu.GTP complex up to the GTP hydrolysis stage on the ribosome. This Yersinia pseudotuberculosis serotype O:1b (strain IP 31758) protein is Elongation factor Ts.